A 958-amino-acid polypeptide reads, in one-letter code: Translation initiation factor IF-2 (958 aa).

Disordered regions lie at residues 67 to 95 and 111 to 355; these read APAASRPAAPAPGPAAPKAPAPAPAAPAP and PAPA…VPRG. Residues 75-95 show a composition bias toward pro residues; the sequence is APAPGPAAPKAPAPAPAAPAP. Residues 140 to 161 show a composition bias toward low complexity; sequence PAPARQGGQAPRPGGPRPGNNP. Residues 195–206 show a composition bias toward basic and acidic residues; it reads RGERRNDGERPG. Residues 209–221 are compositionally biased toward low complexity; that stretch reads RPAAGAGGPRPAA. The segment covering 228–241 has biased composition (pro residues); sequence PGAPRPGAPRPGAP. Over residues 268–325 the composition is skewed to gly residues; it reads GGAGRPGGAGRPGGGPGRPGGAPGAGTGGGAPAGGGFGKGGRGRGGTQGAFGKGGAGR. Residues 326–335 are compositionally biased toward basic residues; that stretch reads GKQRKSKRAK. The 172-residue stretch at 450–621 folds into the tr-type G domain; that stretch reads ARAPVVTVMG…AVLLTADAAL (172 aa). A G1 region spans residues 459–466; it reads GHVDHGKT. Residue 459 to 466 coordinates GTP; that stretch reads GHVDHGKT. The G2 stretch occupies residues 484–488; sequence GITQH. The tract at residues 509 to 512 is G3; the sequence is DTPG. GTP contacts are provided by residues 509-513 and 563-566; these read DTPGH and NKID. The interval 563–566 is G4; it reads NKID. Positions 599-601 are G5; sequence SAR.

The protein belongs to the TRAFAC class translation factor GTPase superfamily. Classic translation factor GTPase family. IF-2 subfamily.

It localises to the cytoplasm. Functionally, one of the essential components for the initiation of protein synthesis. Protects formylmethionyl-tRNA from spontaneous hydrolysis and promotes its binding to the 30S ribosomal subunits. Also involved in the hydrolysis of GTP during the formation of the 70S ribosomal complex. The polypeptide is Translation initiation factor IF-2 (Paenarthrobacter aurescens (strain TC1)).